Consider the following 538-residue polypeptide: Cytochrome P450 monooxygenase astC (538 aa).

A helical transmembrane segment spans residues 18–38 (ALMLPALVGCALLIYRAFFAI). Position 481 (Cys481) interacts with heme.

It belongs to the cytochrome P450 family. It depends on heme as a cofactor.

It localises to the membrane. It functions in the pathway secondary metabolite biosynthesis; terpenoid biosynthesis. Cytochrome P450 monooxygenase; part of the gene cluster that mediates the biosynthesis of the sesquiterpenoid aspterric acid (AA), an inhibitor of dihydroxy-acid dehydratase (DHAD) effective as an herbicide. AstC catalyzes the third and last step within the pathway and converts the alpha-epoxy carboxylate intermediate produced by the cytochrome P450 monooxygenase astC from (-)daucane into the tricyclic aspterric acid. The protein is Cytochrome P450 monooxygenase astC of Aspergillus terreus (strain NIH 2624 / FGSC A1156).